Here is an 87-residue protein sequence, read N- to C-terminus: CRISPR-associated endoribonuclease Cas2 (87 aa).

D8 contributes to the Mg(2+) binding site.

The protein belongs to the CRISPR-associated endoribonuclease Cas2 protein family. In terms of assembly, homodimer, forms a heterotetramer with a Cas1 homodimer. The cofactor is Mg(2+).

Functionally, CRISPR (clustered regularly interspaced short palindromic repeat), is an adaptive immune system that provides protection against mobile genetic elements (viruses, transposable elements and conjugative plasmids). CRISPR clusters contain sequences complementary to antecedent mobile elements and target invading nucleic acids. CRISPR clusters are transcribed and processed into CRISPR RNA (crRNA). Functions as a ssRNA-specific endoribonuclease. Involved in the integration of spacer DNA into the CRISPR cassette. This chain is CRISPR-associated endoribonuclease Cas2, found in Methanosarcina acetivorans (strain ATCC 35395 / DSM 2834 / JCM 12185 / C2A).